An 86-amino-acid polypeptide reads, in one-letter code: Heat shock factor-binding protein (86 aa).

The stretch at 34 to 63 (MSDSIITKIDDMGGRINELEQSINDLRAEM) forms a coiled coil. The tract at residues 42 to 52 (IDDMGGRINEL) is required for interactions with heat shock factors (HSFs). The disordered stretch occupies residues 59 to 86 (LRAEMGVEGTPPPASKSGDEPKTPASSS).

It belongs to the HSBP1 family. Homohexamer. Interacts with HSFA1A, HSFA1B and HSFA2. As to expression, mostly expressed in siliques and flowers, and, to a lower extent, in roots, stems and leaves.

The protein localises to the nucleus. It localises to the cytoplasm. Its subcellular location is the cytosol. Negative regulator of the heat shock (HS) response. Affects negatively HSFA1B DNA-binding capacity in vitro. Involved in acquired thermotolerance but not basal thermotolerance. Crucial for seed development, after fertilization and during embryogenesis. The protein is Heat shock factor-binding protein of Arabidopsis thaliana (Mouse-ear cress).